The chain runs to 333 residues: MSQTNLLLLCGGGGDEHAISLLSANFFETSLADITGFNVLRVELDADGHYHTKDGDICELTNRKQIRFEDESKRPWPVDYVIPCIHGYPGETGDIQSYFELINLPYFGCDSEASRNCFNKVTAKMWFSALGIPNTPYIFLNEFNDDAISQTEQALETWGSVFIKAASQGSSVGCYRVDSIDELASSLKEAFSYSPYVVVEKTIHARELEVAAYELDGEIVATKPGEIICASNTFYTFDEKYAADSQAETKVEADISDELSREIREYAVKVFKGMKLSHLSRIDFFLTDENEILLNEINTFPGLTPISMFPKMLQNHGDDFTEYLYSNIKSQLI.

In terms of domain architecture, ATP-grasp spans 124–329 (KMWFSALGIP…FTEYLYSNIK (206 aa)). 154–209 (ALETWGSVFIKAASQGSSVGCYRVDSIDELASSLKEAFSYSPYVVVEKTIHARELE) provides a ligand contact to ATP. Mg(2+)-binding residues include D283, E296, and N298.

This sequence belongs to the D-alanine--D-alanine ligase family. Mg(2+) is required as a cofactor. Requires Mn(2+) as cofactor.

Its subcellular location is the cytoplasm. The enzyme catalyses 2 D-alanine + ATP = D-alanyl-D-alanine + ADP + phosphate + H(+). Its pathway is cell wall biogenesis; peptidoglycan biosynthesis. Functionally, cell wall formation. The sequence is that of D-alanine--D-alanine ligase from Shewanella sediminis (strain HAW-EB3).